The chain runs to 269 residues: Undecaprenyl-diphosphatase (269 aa).

The next 7 membrane-spanning stretches (helical) occupy residues 41-61, 78-98, 107-127, 148-167, 184-204, 213-233, and 248-268; these read FATM…VFHY, GFNL…IGLL, LFSP…MIVI, SLLI…SRSA, AEFS…LSLL, LEWQ…LFVV, and FAYY…EKIV.

The protein belongs to the UppP family.

It is found in the cell membrane. The catalysed reaction is di-trans,octa-cis-undecaprenyl diphosphate + H2O = di-trans,octa-cis-undecaprenyl phosphate + phosphate + H(+). In terms of biological role, catalyzes the dephosphorylation of undecaprenyl diphosphate (UPP). Confers resistance to bacitracin. In Thermoanaerobacter pseudethanolicus (strain ATCC 33223 / 39E) (Clostridium thermohydrosulfuricum), this protein is Undecaprenyl-diphosphatase.